The primary structure comprises 282 residues: Phosphatidylserine decarboxylase proenzyme (282 aa).

Residues Asp88, His144, and Ser247 each act as charge relay system; for autoendoproteolytic cleavage activity in the active site. The active-site Schiff-base intermediate with substrate; via pyruvic acid; for decarboxylase activity is Ser247. Ser247 is subject to Pyruvic acid (Ser); by autocatalysis.

Belongs to the phosphatidylserine decarboxylase family. PSD-B subfamily. Prokaryotic type I sub-subfamily. Heterodimer of a large membrane-associated beta subunit and a small pyruvoyl-containing alpha subunit. It depends on pyruvate as a cofactor. Post-translationally, is synthesized initially as an inactive proenzyme. Formation of the active enzyme involves a self-maturation process in which the active site pyruvoyl group is generated from an internal serine residue via an autocatalytic post-translational modification. Two non-identical subunits are generated from the proenzyme in this reaction, and the pyruvate is formed at the N-terminus of the alpha chain, which is derived from the carboxyl end of the proenzyme. The autoendoproteolytic cleavage occurs by a canonical serine protease mechanism, in which the side chain hydroxyl group of the serine supplies its oxygen atom to form the C-terminus of the beta chain, while the remainder of the serine residue undergoes an oxidative deamination to produce ammonia and the pyruvoyl prosthetic group on the alpha chain. During this reaction, the Ser that is part of the protease active site of the proenzyme becomes the pyruvoyl prosthetic group, which constitutes an essential element of the active site of the mature decarboxylase.

The protein localises to the cell membrane. The enzyme catalyses a 1,2-diacyl-sn-glycero-3-phospho-L-serine + H(+) = a 1,2-diacyl-sn-glycero-3-phosphoethanolamine + CO2. The protein operates within phospholipid metabolism; phosphatidylethanolamine biosynthesis; phosphatidylethanolamine from CDP-diacylglycerol: step 2/2. Its function is as follows. Catalyzes the formation of phosphatidylethanolamine (PtdEtn) from phosphatidylserine (PtdSer). The polypeptide is Phosphatidylserine decarboxylase proenzyme (Xanthomonas oryzae pv. oryzae (strain MAFF 311018)).